We begin with the raw amino-acid sequence, 2157 residues long: Polyketide synthase 2 (2157 aa).

The N-terminal acylcarrier protein transacylase domain (SAT) stretch occupies residues 7-244 (FIFGDQTGGF…IPIPIWAPYH (238 aa)). The Ketosynthase family 3 (KS3) domain occupies 374 to 807 (DSKIAIIGMS…GGNSALLLED (434 aa)). Active-site for beta-ketoacyl synthase activity residues include cysteine 546, histidine 681, and histidine 723. A malonyl-CoA:ACP transacylase (MAT) domain region spans residues 908–1213 (GFVFSGQGAQ…ASLHRKDDGW (306 aa)). Serine 998 acts as the For acyl/malonyl transferase activity in catalysis. A product template (PT) domain region spans residues 1290–1605 (TSSVQKIIRQ…RSLLNKVLPP (316 aa)). An N-terminal hotdog fold region spans residues 1294–1428 (QKIIRQTDGP…CLLRFADPTS (135 aa)). The region spanning 1294–1600 (QKIIRQTDGP…FLGMSRSLLN (307 aa)) is the PKS/mFAS DH domain. Histidine 1327 acts as the Proton acceptor; for dehydratase activity in catalysis. Residues 1455 to 1600 (TDSLLSRGIV…FLGMSRSLLN (146 aa)) are C-terminal hotdog fold. Aspartate 1514 acts as the Proton donor; for dehydratase activity in catalysis. A disordered region spans residues 1626 to 1652 (AASAKDTERRPLDIPTRAQRQPSSAQT). Over residues 1643 to 1652 (AQRQPSSAQT) the composition is skewed to polar residues. Residues 1649–1726 (SAQTGTMGRI…ELKAFLGADQ (78 aa)) form the Carrier 1 domain. Serine 1686 bears the O-(pantetheine 4'-phosphoryl)serine mark. Residues 1733 to 1762 (ACESSNGQHTPQTSDKGSGTLAVQKTDDDT) form a disordered region. The segment covering 1735–1755 (ESSNGQHTPQTSDKGSGTLAV) has biased composition (polar residues). The 75-residue stretch at 1765-1839 (DMTLNRVCAI…SLQKALCGSE (75 aa)) folds into the Carrier 2 domain. Serine 1799 is modified (O-(pantetheine 4'-phosphoryl)serine). The segment at 1840–1859 (AASNGAPEANETTPSSHRLE) is disordered. Residues 1875 to 2151 (ASPPHATSIL…MIEMGNLIGE (277 aa)) are thioesterase (TE) domain. The active-site For thioesterase activity is serine 1981.

Polyketide synthase; part of the Pks2 gene cluster that mediates the formation of infectious structures (appressoria), enabling these fungi to kill insects faster. The product of the Pks2 gene cluster is different from the one of Pks1 and has still not been identified. The protein is Polyketide synthase 2 of Metarhizium robertsii (strain ARSEF 23 / ATCC MYA-3075) (Metarhizium anisopliae (strain ARSEF 23)).